The sequence spans 82 residues: Penaeidin-3b (82 aa).

The signal sequence occupies residues 1-19 (MRLVVCLVFLASFALVCQG). Gln20 is subject to Pyrrolidone carboxylic acid. 3 disulfides stabilise this stretch: Cys51–Cys66, Cys55–Cys73, and Cys67–Cys74. A Serine amide modification is found at Ser81.

It belongs to the penaeidin family. In terms of tissue distribution, higher expression in hemocytes and to a lesser extent in heart, testis, gills, intestine, lymphoid organ and hepatopancreas. Traces in eyes and subcuticular epithelium. Not present in the brain.

It is found in the cytoplasmic granule. Its function is as follows. Antibacterial activity against M.luteus and E.coli bacteria. Antifungal activity against N.crassa and F.oxysporum. Presents chitin-binding activity. This chain is Penaeidin-3b, found in Penaeus vannamei (Whiteleg shrimp).